The chain runs to 647 residues: Acetyl-coenzyme A synthetase (647 aa).

Residues Arg190–Lys193, Thr310, and Asn334 contribute to the CoA site. ATP-binding positions include Gly386–Pro388, Asp410–Thr415, Asp499, and Arg514. CoA is bound at residue Ser522. Residue Arg525 participates in ATP binding. Residues Val536, His538, and Val541 each coordinate Mg(2+). Residue Arg583 coordinates CoA. Lys608 is modified (N6-acetyllysine).

It belongs to the ATP-dependent AMP-binding enzyme family. Mg(2+) serves as cofactor. Acetylated. Deacetylation by the SIR2-homolog deacetylase activates the enzyme.

The enzyme catalyses acetate + ATP + CoA = acetyl-CoA + AMP + diphosphate. Its function is as follows. Catalyzes the conversion of acetate into acetyl-CoA (AcCoA), an essential intermediate at the junction of anabolic and catabolic pathways. AcsA undergoes a two-step reaction. In the first half reaction, AcsA combines acetate with ATP to form acetyl-adenylate (AcAMP) intermediate. In the second half reaction, it can then transfer the acetyl group from AcAMP to the sulfhydryl group of CoA, forming the product AcCoA. The chain is Acetyl-coenzyme A synthetase from Xanthomonas axonopodis pv. citri (strain 306).